Here is a 224-residue protein sequence, read N- to C-terminus: Orotidine 5'-phosphate decarboxylase (224 aa).

Substrate contacts are provided by residues D10, K32, 59–68 (DLKLHDIPNT), T115, R175, Q184, G204, and R205. The active-site Proton donor is the K61.

This sequence belongs to the OMP decarboxylase family. Type 1 subfamily. As to quaternary structure, homodimer.

It carries out the reaction orotidine 5'-phosphate + H(+) = UMP + CO2. It functions in the pathway pyrimidine metabolism; UMP biosynthesis via de novo pathway; UMP from orotate: step 2/2. Catalyzes the decarboxylation of orotidine 5'-monophosphate (OMP) to uridine 5'-monophosphate (UMP). The polypeptide is Orotidine 5'-phosphate decarboxylase (Sphingopyxis alaskensis (strain DSM 13593 / LMG 18877 / RB2256) (Sphingomonas alaskensis)).